Here is a 1034-residue protein sequence, read N- to C-terminus: Phosphoenolpyruvate carboxylase (1034 aa).

Residues histidine 203 and lysine 680 contribute to the active site.

This sequence belongs to the PEPCase type 1 family. Mg(2+) is required as a cofactor.

The enzyme catalyses oxaloacetate + phosphate = phosphoenolpyruvate + hydrogencarbonate. Its function is as follows. Forms oxaloacetate, a four-carbon dicarboxylic acid source for the tricarboxylic acid cycle. The polypeptide is Phosphoenolpyruvate carboxylase (ppc) (Synechocystis sp. (strain ATCC 27184 / PCC 6803 / Kazusa)).